We begin with the raw amino-acid sequence, 123 residues long: Phosphoribosyl-AMP cyclohydrolase (123 aa).

Aspartate 76 contributes to the Mg(2+) binding site. Residue cysteine 77 coordinates Zn(2+). Residues aspartate 78 and aspartate 80 each coordinate Mg(2+). Cysteine 93 and cysteine 100 together coordinate Zn(2+).

This sequence belongs to the PRA-CH family. As to quaternary structure, homodimer. It depends on Mg(2+) as a cofactor. The cofactor is Zn(2+).

The protein localises to the cytoplasm. It carries out the reaction 1-(5-phospho-beta-D-ribosyl)-5'-AMP + H2O = 1-(5-phospho-beta-D-ribosyl)-5-[(5-phospho-beta-D-ribosylamino)methylideneamino]imidazole-4-carboxamide. The protein operates within amino-acid biosynthesis; L-histidine biosynthesis; L-histidine from 5-phospho-alpha-D-ribose 1-diphosphate: step 3/9. Its function is as follows. Catalyzes the hydrolysis of the adenine ring of phosphoribosyl-AMP. The chain is Phosphoribosyl-AMP cyclohydrolase from Methanocorpusculum labreanum (strain ATCC 43576 / DSM 4855 / Z).